The sequence spans 484 residues: Pheophytinase, chloroplastic (484 aa).

The transit peptide at 1–47 (MEIISLNVVPQCSVVTWSSKLATKRLVPNRSSLLFSGVKKSRLVIRS) directs the protein to the chloroplast.

Belongs to the AB hydrolase superfamily. Interacts with HCAR, RCCR, PAO and the LHCII complex. Part of a SGR1-CCE-LHCII complex, which acts in chlorophyll breakdown.

It localises to the plastid. The protein resides in the chloroplast thylakoid membrane. It is found in the chloroplast stroma. Functionally, alpha/beta hydrolase dephytylating specifically the Mg-free chlorophyll pigment (pheophytin), yielding pheophorbide. No activity on chlorophyll. Belongs to the chlorophyll catabolic enzymes (CCEs). In Arabidopsis thaliana (Mouse-ear cress), this protein is Pheophytinase, chloroplastic (PPH).